The chain runs to 492 residues: Catalase (492 aa).

Active-site residues include H65 and N138. Heme is bound at residue Y348.

It belongs to the catalase family. As to quaternary structure, homotetramer. Heme serves as cofactor.

The protein localises to the cytoplasm. The protein resides in the cytosol. It is found in the peroxisome matrix. It catalyses the reaction 2 H2O2 = O2 + 2 H2O. Its function is as follows. Catalyzes the degradation of hydrogen peroxide (H(2)O(2)) generated by peroxisomal oxidases to water and oxygen, thereby protecting cells from the toxic effects of hydrogen peroxide. The protein is Catalase (CATA) of Triticum aestivum (Wheat).